The chain runs to 372 residues: D-alanine--D-alanine ligase (372 aa).

Residues 145–349 enclose the ATP-grasp domain; sequence KTVLRAGGIP…CPNLLDQLIE (205 aa). 176–231 contributes to the ATP binding site; the sequence is DRWGTSELFVKAVSLGSSVATLPVKTETEFTKAVKEVFRYDDRLMVEPRIRGREIE. Mg(2+) is bound by residues Asp-303, Glu-316, and Asn-318.

It belongs to the D-alanine--D-alanine ligase family. Mg(2+) is required as a cofactor. It depends on Mn(2+) as a cofactor.

The protein resides in the cytoplasm. It catalyses the reaction 2 D-alanine + ATP = D-alanyl-D-alanine + ADP + phosphate + H(+). It participates in cell wall biogenesis; peptidoglycan biosynthesis. In terms of biological role, cell wall formation. The polypeptide is D-alanine--D-alanine ligase (Coxiella burnetii (strain RSA 331 / Henzerling II)).